We begin with the raw amino-acid sequence, 133 residues long: Nickel-responsive regulator (133 aa).

Residues histidine 76, histidine 87, histidine 89, and cysteine 95 each coordinate Ni(2+).

This sequence belongs to the transcriptional regulatory CopG/NikR family. In terms of assembly, homotetramer. Requires Ni(2+) as cofactor.

Functionally, transcriptional repressor of the nikABCDE operon. Is active in the presence of excessive concentrations of intracellular nickel. In Salmonella paratyphi A (strain ATCC 9150 / SARB42), this protein is Nickel-responsive regulator.